A 181-amino-acid polypeptide reads, in one-letter code: Organelle RRM domain-containing protein 6, chloroplastic (181 aa).

The N-terminal 44 residues, 1–44 (MAISLGRVVVPSCTISGDRLFIPNFSAICSVSCGRINVGTGVIS), are a transit peptide targeting the chloroplast. Residues 77-155 (TKLYVSGLSF…RVIFVEEAKT (79 aa)) enclose the RRM domain. The span at 155 to 169 (TRSDMSRAKPRRDFP) shows a compositional bias: basic and acidic residues. The segment at 155–181 (TRSDMSRAKPRRDFPKPQSKPRTFRTW) is disordered.

As to quaternary structure, interacts with MORF8/RIP1, MORF2/RIP2, MORF9/RIP9 and VAR3/OZ1.

It localises to the plastid. The protein resides in the chloroplast. Its function is as follows. Involved in C-to-U editing of chloroplastic RNA. Required for the photosynthetic subunit psbF transcript editing in chloroplast. This is Organelle RRM domain-containing protein 6, chloroplastic from Arabidopsis thaliana (Mouse-ear cress).